A 1131-amino-acid chain; its full sequence is Filamin A-interacting protein 1-like (1131 aa).

The segment at 1–62 is disordered; it reads MRSRSSNAEG…KSHTGKGHHT (62 aa). The segment covering 50-62 has biased composition (basic and acidic residues); it reads VSEKSHTGKGHHT. Coiled-coil stretches lie at residues 139 to 583 and 610 to 780; these read NELD…LSKV and SKST…KSLR. At Ser789 the chain carries Phosphoserine. Residues Thr984 and Thr992 each carry the phosphothreonine modification. Position 1050 is a phosphoserine (Ser1050).

This sequence belongs to the FILIP1 family.

The protein localises to the cytoplasm. The protein resides in the membrane. It is found in the nucleus. Its function is as follows. Acts as a regulator of the antiangiogenic activity on endothelial cells. When overexpressed in endothelial cells, leads to inhibition of cell proliferation and migration and an increase in apoptosis. Inhibits melanoma growth When expressed in tumor-associated vasculature. This chain is Filamin A-interacting protein 1-like (Filip1l), found in Mus musculus (Mouse).